The following is a 176-amino-acid chain: Envelope protein 167 (176 aa).

Residue Met-1 is a topological domain, intravirion. A helical membrane pass occupies residues 2-22; sequence YLVLLIAIILFITIILVIFLI. At 23-176 the chain is on the virion surface side; it reads SGLFYPEQNP…AVMAIPRKVL (154 aa).

It belongs to the asfivirus envelope protein p22 family.

The protein resides in the virion membrane. The protein localises to the host cell membrane. This chain is Envelope protein 167, found in African swine fever virus (isolate Warthog/Namibia/Wart80/1980) (ASFV).